A 253-amino-acid chain; its full sequence is uncharacterized protein (253 aa).

Ile-6 to Gly-30 lines the NADP(+) pocket. A substrate-binding site is contributed by Ser-140. The active-site Proton acceptor is the Tyr-153.

This sequence belongs to the short-chain dehydrogenases/reductases (SDR) family.

This is an uncharacterized protein from Escherichia coli (strain K12).